Consider the following 250-residue polypeptide: GTP cyclohydrolase 1 type 2 homolog (250 aa).

Positions 63, 64, 100, 218, and 222 each coordinate a divalent metal cation.

This sequence belongs to the GTP cyclohydrolase I type 2/NIF3 family. In terms of assembly, homohexamer.

This Pyrococcus horikoshii (strain ATCC 700860 / DSM 12428 / JCM 9974 / NBRC 100139 / OT-3) protein is GTP cyclohydrolase 1 type 2 homolog.